We begin with the raw amino-acid sequence, 591 residues long: Acetyltransferase spyB (591 aa).

N-linked (GlcNAc...) asparagine glycosylation occurs at Asn114. 9 helical membrane passes run 123 to 143, 168 to 188, 199 to 219, 228 to 248, 309 to 329, 383 to 403, 453 to 473, 481 to 501, and 529 to 549; these read GTIIWTLKYVPLAASRCLIFL, TLLYALPFLLAQNLVPAILIL, LWIFWSVFVFYQWLQIPISHG, VGVQLFIVILQGFNLVLINPL, SAFLVRQAAIVAWLYLYLNCA, ASILSVGVGLDAPEDWPPLFG, IFFVFLVSGVMHVMSDLLMGI, ILFFCSMAVGVMIEDAVQAAW, and LVGFIWVCVWLSLTTPAWLCP.

The protein belongs to the wax synthase family.

The protein resides in the membrane. It catalyses the reaction sartorypyrone F + acetyl-CoA = sartorypyrone G + CoA. It carries out the reaction sartorypyrone D + acetyl-CoA = sartorypyrone A + CoA. Its pathway is secondary metabolite biosynthesis; terpenoid biosynthesis. Its function is as follows. Acetyltransferase; part of the gene cluster that mediates the biosynthesis of meroterpenoids called sartorypyrones. SpyB catalyzes the last step of the pathway and is responsible for the acetylation of sartorypyrones D and F to produce sartorypyrones A and G, respectively. The biosynthesis of sartorypyrones begins with the production of triacetic acid lactone (TAL) by the NR-PKS spyA using one molecule of acetyl-CoA and two molecules of malonyl-CoA. The prenyltransferase spyF then conjugates geranylgeranyl pyrophosphate (GGPP) to TAL to form geranylgeranyl-triacetate lactone, for which the pathway-specific geranylgeranyl pyrophosphate synthase (GGPS) spyE is required to provide GGPP. Subsequently, geranylgeranyl-triacetate lactone is epoxidized at the terminal olein by the FAD-dependent monooxygenase spyC, followed by cyclization of the terpenoid component catalyzed by the terpene cyclase spyD to produce both the bicyclic sartorypyrone F and the monocyclic sartorypyrone D. Finally, the last step of the biosynthesis involves the acetylation of the meroterpenoids sartorypyrones D and F by the acetyltransferase SpyB to produce sartorypyrones A and G, respectively. The chain is Acetyltransferase spyB from Aspergillus fumigatus (strain ATCC MYA-4609 / CBS 101355 / FGSC A1100 / Af293) (Neosartorya fumigata).